The following is a 193-amino-acid chain: Adenine phosphoribosyltransferase (193 aa).

This sequence belongs to the purine/pyrimidine phosphoribosyltransferase family. Homodimer.

The protein resides in the cytoplasm. It carries out the reaction AMP + diphosphate = 5-phospho-alpha-D-ribose 1-diphosphate + adenine. The protein operates within purine metabolism; AMP biosynthesis via salvage pathway; AMP from adenine: step 1/1. Functionally, catalyzes a salvage reaction resulting in the formation of AMP, that is energically less costly than de novo synthesis. The chain is Adenine phosphoribosyltransferase from Bifidobacterium animalis subsp. lactis (strain AD011).